The sequence spans 283 residues: MKSELNLPAGFRFHPTDEELVKFYLCRKCASEQISAPVIAEIDLYKFNPWELPEMSLYGEKEWYFFSPRDRKYPNGSRPNRAAGTGYWKATGADKPIGKPKTLGIKKALVFYAGKAPKGIKTNWIMHEYRLANVDRSASVNKKNNLRLDDWVLCRIYNKKGTMEKYFPADEKPRTTTMAEQSSSPFDTSDSTYPTLQEDDSSSSGGHGHVVSPDVLEVQSEPKWGELEDALEAFDTSMFGSSMELLQPDAFVPQFLYQSDYFTSFQDPPEQKPFLNWSFAPQG.

Residues 7-159 (LPAGFRFHPT…DWVLCRIYNK (153 aa)) form the NAC domain. A DNA-binding region spans residues 103-165 (LGIKKALVFY…IYNKKGTMEK (63 aa)). The tract at residues 171–211 (EKPRTTTMAEQSSSPFDTSDSTYPTLQEDDSSSSGGHGHVV) is disordered. Residues 175 to 195 (TTTMAEQSSSPFDTSDSTYPT) are compositionally biased toward polar residues.

In terms of assembly, homodimer. Interacts with AHK2. Interacts with AHL12 and AHL27. Interacts with the helicase domain of the tobamovirus (TMV) replicase. Expressed in roots, cotyledons, rosette leaves, cauline leaves and mature flowers. Expressed at low levels in stems and flower buds.

It is found in the nucleus. Involved in disease resistance response. May function as repressor of pathogenesis-related proteins. May function in the regulation of host basal defense responses against viral infection. Transcriptional activator involved in responses to wounding and infection with tobamovirus (TMV). Binds to the DNA sequences 5'-AAAATATCT-3' and 5'AGATTTTT-3' of CYP734A1/BAS1 and CYP72C1/SOB7 promoters, respectively. Acts as a suppressor of the brassinosteroid (BR)-inactivating enzymes CYP734A1/BAS1 and CYP72C1/SOB7, and prevents their expression in almost all tissues. Plays a central role in integrating BR homeostasis and seedling development. Regulates the spatial regulation of BR homeostasis and participates in the regulation of hypocotyl elongation and root growth by suppressing BR catabolism. Mediates connection between BR catabolism and photomorphogenesis. Binds to, and transactivates the promoter of the auxin biosynthetic gene NIT2. Stress-responsive NAC transcription factor involved in ABA-inducible leaf senescence signaling. Required for normal seed development and morphology. The chain is Protein ATAF2 (NAC081) from Arabidopsis thaliana (Mouse-ear cress).